Here is a 118-residue protein sequence, read N- to C-terminus: Late cornified envelope protein 1C (118 aa).

Low complexity predominate over residues 1 to 10 (MSCQQSQQQC). Disordered stretches follow at residues 1 to 23 (MSCQ…CPPK) and 87 to 118 (CHRP…GGCC). The span at 11-23 (QPPPKCTPKCPPK) shows a compositional bias: pro residues. Low complexity predominate over residues 90–103 (PQSSGCCSQPSGGS). Over residues 104 to 118 (SCCGGGSGQHSGGCC) the composition is skewed to gly residues.

Belongs to the LCE family. Interacts with CYSRT1. Skin-specific. Expression was readily detected in adult trunk skin, adult arm skin, fetal skin, penal skin, vulva, esophagus and tongue. Not expressed in the cervix, rectum, lung, colon, or placenta.

Its function is as follows. Precursors of the cornified envelope of the stratum corneum. In Homo sapiens (Human), this protein is Late cornified envelope protein 1C (LCE1C).